A 200-amino-acid chain; its full sequence is MTTHRKPSQEQGFLNGQFLLAMPGMSDERFARSVVYICAHSGEGAMGFIINQLQPVQFPDLLRQIGVIGEEDLIILPDRAQHMVARNGGPVDRTRGFVLHSDDYMVDSTMPVSDDVCLTATVDILRAIYGGGGPERALMALGYSGWAPGQLEMEVAENGWLTCDAPLDMLFDSDIEGKYSRLMLHMGIDMSQLVSDAGHA.

This sequence belongs to the UPF0301 (AlgH) family.

In Brucella ovis (strain ATCC 25840 / 63/290 / NCTC 10512), this protein is UPF0301 protein BOV_0485.